The primary structure comprises 360 residues: MSDLAKLESEILSAVAAAPDEAALEAVRVGALGKKGSISALLSTLGKMSPEERKTEGAAINAAKDKVTAALTARREVLKNAALDARLASETIDVTLPTRETPAEQGRIHPISQVMDELTAIFADMGFSIAEGPDIETDDYNFTKLNFPEGHPAREMHDTFFFNRKEDGSRPLLRTHTSPVQVRTMLSQQPPIRVICPGRTYRCDSDQTHTPMFHQVEGLVIDKGSHLGHLKWILSEFCKAFFEVDNVNMRFRPSFFPFTEPSMEVDIQCRRGKNDIRFGEGDDWLEILGCGMVHPNVLKNCGIDPDVYQGFAWGMGIDRIAMLKYGISDLRQMFEGDVRWLNHYGFKPLDVPTLAGGLSS.

E260 contributes to the Mg(2+) binding site.

This sequence belongs to the class-II aminoacyl-tRNA synthetase family. Phe-tRNA synthetase alpha subunit type 1 subfamily. As to quaternary structure, tetramer of two alpha and two beta subunits. Mg(2+) is required as a cofactor.

The protein localises to the cytoplasm. The enzyme catalyses tRNA(Phe) + L-phenylalanine + ATP = L-phenylalanyl-tRNA(Phe) + AMP + diphosphate + H(+). This chain is Phenylalanine--tRNA ligase alpha subunit, found in Afipia carboxidovorans (strain ATCC 49405 / DSM 1227 / KCTC 32145 / OM5) (Oligotropha carboxidovorans).